Consider the following 381-residue polypeptide: GDP-mannose transporter (381 aa).

Over 1–39 (MVESKKTDDYAIEMDKIDQGSKNFEAAAPPQPRSVPSSS) the chain is Cytoplasmic. The chain crosses the membrane as a helical span at residues 40 to 60 (LSGNPVLPVLAYCGSSILMTV). The Lumenal segment spans residues 61-68 (MNKYVLSG). The helical transmembrane segment at 69–89 (LDFNLNFFLLCVQSIVCIIAI) threads the bilayer. Over 90 to 109 (QTCKFCGLITYRDFSADEAK) the chain is Cytoplasmic. The helical transmembrane segment at 110 to 126 (KWFPISLLLIGMIYTGS) threads the bilayer. Residues 127 to 133 (KALQFLS) lie on the Lumenal side of the membrane. Residues 134 to 150 (IPVYTIFKNLTIILIAY) form a helical membrane-spanning segment. Topologically, residues 151 to 159 (GEVLWFGGS) are cytoplasmic. The helical transmembrane segment at 160 to 181 (VTGLTLFSFGLMVLSSIIAAWA) threads the bilayer. Topologically, residues 182 to 199 (DIKHAVESSGDTSAQVST) are lumenal. A helical transmembrane segment spans residues 200 to 220 (LNAGYIWMLINCLCTSSYVLG). Residues 221 to 232 (MRKRIKLTNFKD) are Cytoplasmic-facing. The helical transmembrane segment at 233–253 (FDTMFYNNLLSIPVLVVLTGL) threads the bilayer. Over 254-273 (MEDWSSANIDRNFPQADRSS) the chain is Lumenal. The helical transmembrane segment at 274–294 (IMFAMILSGLSSVFISYTSAW) threads the bilayer. At 295–302 (CVRVTSST) the chain is on the cytoplasmic side. A helical transmembrane segment spans residues 303–323 (TYSMVGALNKLPIALSGLIFF). Residues 324-326 (DAP) lie on the Lumenal side of the membrane. Residues 327–347 (VTFPSVSAIAVGFVSGIVYAI) traverse the membrane as a helical segment. The Cytoplasmic segment spans residues 348–381 (AKIKQNAKPKTGVLPTSNPLVSASSQSMRDSLRS).

The protein belongs to the TPT transporter family. SLC35D subfamily. Homooligomer.

The protein resides in the golgi apparatus membrane. It localises to the cytoplasmic vesicle membrane. It is found in the endoplasmic reticulum membrane. Its function is as follows. Involved in the import of GDP-mannose from the cytoplasm into the Golgi lumen. This Aspergillus oryzae (strain ATCC 42149 / RIB 40) (Yellow koji mold) protein is GDP-mannose transporter (gmt1).